Here is a 712-residue protein sequence, read N- to C-terminus: Asp/Glu-specific dipeptidyl-peptidase (712 aa).

The N-terminal stretch at 1 to 18 (MKRFFKMALFLGVSALYG) is a signal peptide. Residues His84, Asp220, and Ser647 each act as charge relay system in the active site.

It belongs to the peptidase S46 family.

Its function is as follows. Catalyzes the removal of dipeptides from the N-terminus of oligopeptides. Shows a strict specificity for acidic residues (Asp or Glu) in the P1 position, and has probably a hydrophobic residue preference at the P2 position. Preferentially cleaves the synthetic substrate Leu-Asp-methylcoumaryl-7-amide (Leu-Asp-MCA) as compared to Leu-Glu-MCA. In Capnocytophaga gingivalis, this protein is Asp/Glu-specific dipeptidyl-peptidase (dpp11).